Reading from the N-terminus, the 286-residue chain is tRNA (guanine-N(7)-)-methyltransferase (286 aa).

Positions 1–22 are disordered; it reads MGRARPKSQKRGDYRVSRSQEN. S-adenosyl-L-methionine-binding positions include Gly104, 127–128, 162–163, and Cys182; these read EI and NS. Residue Asp185 is part of the active site. 260–262 contributes to the S-adenosyl-L-methionine binding site; sequence TEE.

Belongs to the class I-like SAM-binding methyltransferase superfamily. TrmB family. As to quaternary structure, forms a complex with TRM82.

It is found in the nucleus. The enzyme catalyses guanosine(46) in tRNA + S-adenosyl-L-methionine = N(7)-methylguanosine(46) in tRNA + S-adenosyl-L-homocysteine. The protein operates within tRNA modification; N(7)-methylguanine-tRNA biosynthesis. Catalyzes the formation of N(7)-methylguanine at position 46 (m7G46) in tRNA. The protein is tRNA (guanine-N(7)-)-methyltransferase of Colletotrichum orbiculare (strain 104-T / ATCC 96160 / CBS 514.97 / LARS 414 / MAFF 240422) (Cucumber anthracnose fungus).